The sequence spans 228 residues: FCS-Like Zinc finger 12 (228 aa).

Residues Asp-162 to Glu-205 form an FLZ-type zinc finger.

This sequence belongs to the FLZ family. In terms of assembly, interacts with KIN10 and KIN11 via its FLZ-type zinc finger domain. Interacts with KINB1 and KINB2 via its N-terminal part. Forms homodimer and heterodimer with FLZ2 and FLZ10 in vitro.

Its function is as follows. May act as an adapter to facilitate the interaction of SnRK1 complex with effector proteins, conferring tissue- and stimulus-type specific differences in the SnRK1 regulation pathway. In Arabidopsis thaliana (Mouse-ear cress), this protein is FCS-Like Zinc finger 12.